Consider the following 117-residue polypeptide: Con-Ins T3 (117 aa).

The signal sequence occupies residues 1-24 (MTTSFYFLLMALGLLLYVCQSSFG). Residues 25–29 (NQHTR) constitute a propeptide that is removed on maturation. The residue at position 34 (P34) is a 4-hydroxyproline; partial. 3 disulfide bridges follow: C38–C101, C50–C114, and C100–C105. Positions 53–94 (KRNDAGKKRGQASPLWQRGGSLSMLKARAKRNEAFHLQRAHR) are cleaved as a propeptide — c peptide. Position 98 is a 4-carboxyglutamate (E98). At E109 the chain carries 4-carboxyglutamate; partial. At C114 the chain carries Cysteine amide. The propeptide occupies 116 to 117 (NS).

Belongs to the insulin family. Heterodimer of A and B chains; disulfide-linked. As to expression, expressed by the venom gland.

The protein resides in the secreted. This venom insulin facilitates prey capture by rapidly inducing hypoglycemic shock. It is one of the smallest known insulin found in nature and lacks the C-terminal segment of the B chain that, in human insulin, mediates engagement of the insulin receptor (INSR) and assembly of the hormone's hexameric storage form. Despite lacking this segment, it both binds and activates human insulin receptor (long isoform (HIR-B) OF INSR) with only a 10-fold lower potency. In vivo, intraperitoneal injection of this peptide into zebrafish lowers blood glucose with the same potency than human insulin. In addition, when applied to water, this peptide reduces overall locomotor activity of zebrafish larvae, observed as a significant decrease in the percentage of time spent swimming and movement frequency. The sequence is that of Con-Ins T3 from Conus tulipa (Fish-hunting cone snail).